A 442-amino-acid polypeptide reads, in one-letter code: Circumsporozoite protein (442 aa).

A signal peptide spans 1-18 (MMRKLAILSVSSFLFVEA). Positions 69–357 (SRSLGENDDG…VKNNNNEEPS (289 aa)) are disordered. Residues 81–94 (DNGNNNNGNNNNGD) are compositionally biased toward low complexity. Positions 95 to 115 (NGREGKDEDKRDGNNEDNEKL) are enriched in basic and acidic residues. The interval 114–121 (KLRKPKHK) is required for the binding to heparan sulfate proteoglycans (HSPGs) on the surface of host hepatocytes. A region I; contains the proteolytic cleavage site region spans residues 122-126 (KLKQP). Residues 130 to 318 (NPDPNANPNV…PNANPNANPN (189 aa)) are compositionally biased toward low complexity. 46 repeat units span residues 134 to 137 (NANP), 138 to 141 (NVDP), 142 to 145 (NANP), 146 to 149 (NVDP), 150 to 153 (NANP), 154 to 157 (NANP), 158 to 161 (NANP), 162 to 165 (NANP), 166 to 169 (NANP), 170 to 173 (NANP), 174 to 177 (NANP), 178 to 181 (NANP), 182 to 185 (NANP), 186 to 189 (NANP), 190 to 193 (NANP), 194 to 197 (NANP), 198 to 201 (NANP), 202 to 205 (NANP), 206 to 209 (NANP), 210 to 213 (NVDP), 214 to 217 (NANP), 218 to 221 (NANP), 222 to 225 (NANP), 226 to 229 (NANP), 230 to 233 (NANP), 234 to 237 (NANP), 238 to 241 (NANP), 242 to 245 (NANP), 246 to 249 (NANP), 250 to 253 (NANP), 254 to 257 (NANP), 258 to 261 (NANP), 262 to 265 (NANP), 266 to 269 (NANP), 270 to 273 (NANP), 274 to 277 (NANP), 278 to 281 (NANP), 282 to 285 (NANP), 286 to 289 (NANP), 290 to 293 (NANP), 294 to 297 (NANP), 298 to 301 (NANP), 302 to 305 (NANP), 306 to 309 (NANP), 310 to 313 (NANP), and 314 to 317 (NANP). A 46 X 4 AA tandem repeats of N-[AV]-[ND]-P region spans residues 134-317 (NANPNVDPNA…NPNANPNANP (184 aa)). Residues 319–334 (KNNQGNGQGHNMPNDP) are compositionally biased toward polar residues. The span at 340-354 (ENANANNAVKNNNNE) shows a compositional bias: low complexity. The 54-residue stretch at 367–420 (KIQNSLSTEWSPCSVTCGNGIQVRIKPGSADKPKDQLDYENDIEKKICKMEKCS) folds into the TSP type-1 domain. Disulfide bonds link Cys379–Cys414 and Cys383–Cys419. O-linked (Fuc) threonine glycosylation is present at Thr382. A lipid anchor (GPI-anchor amidated cysteine) is attached at Cys419. A propeptide spans 420–442 (SSVFNVVNSSIGLIMVLSFLFLN) (removed in mature form).

The protein belongs to the plasmodium circumsporozoite protein family. In terms of processing, during host cell invasion, proteolytically cleaved at the cell membrane in the region I by a papain-like cysteine protease of parasite origin. Cleavage is triggered by the sporozoite contact with highly sulfated heparan sulfate proteoglycans (HSPGs) present on the host hepatocyte cell surface. Cleavage exposes the TSP type-1 (TSR) domain and is required for productive invasion of host hepatocytes but not for adhesion to the host cell membrane. Cleavage is dispensable for sporozoite development in the oocyst, motility and for traversal of host and vector cells. Post-translationally, O-glycosylated; maybe by POFUT2.

It localises to the cell membrane. The protein localises to the cytoplasm. Its function is as follows. Essential sporozoite protein. In the mosquito vector, required for sporozoite development in the oocyst, migration through the vector hemolymph and entry into the vector salivary glands. In the vertebrate host, required for sporozoite migration through the host dermis and infection of host hepatocytes. Binds to highly sulfated heparan sulfate proteoglycans (HSPGs) on the surface of host hepatocytes. In terms of biological role, in the vertebrate host, binds to highly sulfated heparan sulfate proteoglycans (HSPGs) on the surface of host hepatocytes and is required for sporozoite invasion of the host hepatocytes. The sequence is that of Circumsporozoite protein from Plasmodium falciparum (isolate Wellcome).